A 111-amino-acid polypeptide reads, in one-letter code: UPF0235 protein glr3835 (111 aa).

This sequence belongs to the UPF0235 family.

The chain is UPF0235 protein glr3835 from Gloeobacter violaceus (strain ATCC 29082 / PCC 7421).